Reading from the N-terminus, the 192-residue chain is MLKKSLAALALGTALLSAGQAMAADYVIDKEGQHAFVDFKISHLGYSFIHGTFKDWDGTFSFDAAKPEASKINVELKTASLFTNHAERDKHISSKDFLDVAKYPEAKFVSTAVKSTGEKTADVTGDLTLHGVTKPIVIKATFNGEGKDPWGGYRAGFNGTSTLNLNDFGIKGPGPTSQTLDLDITFEGVQKK.

The signal sequence occupies residues methionine 1 to alanine 23.

It belongs to the UPF0312 family. Type 1 subfamily.

It localises to the periplasm. In Pseudomonas syringae pv. tomato (strain ATCC BAA-871 / DC3000), this protein is UPF0312 protein PSPTO_5071.